Consider the following 444-residue polypeptide: E3 ubiquitin-protein ligase APD2 (444 aa).

Residues 1–15 (MSLPDSLPSSSSSPP) are compositionally biased toward low complexity. A disordered region spans residues 1–41 (MSLPDSLPSSSSSPPVTREETGFHRFEHHGNDSGFDHRDRP). A compositionally biased stretch (basic and acidic residues) spans 17-41 (TREETGFHRFEHHGNDSGFDHRDRP). 2 helical membrane-spanning segments follow: residues 74 to 94 (VVVV…GLYG) and 312 to 332 (IAYI…SSLF). The RING-type zinc finger occupies 393 to 432 (CAICYDAPRDCFFLSCGHCVACFQCGTRIAETSGFCPVCR).

As to quaternary structure, interacts with At1g78040, At1g10650, VHA-c4/AVAP4, VHA-c''2/VMA16 and TUFA. As to expression, expressed in the shoot apical meristems (SAM), root tips, pollen and inflorescences.

Its subcellular location is the endomembrane system. It catalyses the reaction S-ubiquitinyl-[E2 ubiquitin-conjugating enzyme]-L-cysteine + [acceptor protein]-L-lysine = [E2 ubiquitin-conjugating enzyme]-L-cysteine + N(6)-ubiquitinyl-[acceptor protein]-L-lysine.. It functions in the pathway protein modification; protein ubiquitination. Exhibits E2-dependent E3 ligase activity. Involved in pollen mitosis II (PMII) regulation during male gametogenesis. The chain is E3 ubiquitin-protein ligase APD2 from Arabidopsis thaliana (Mouse-ear cress).